The chain runs to 147 residues: Nucleoside diphosphate kinase (147 aa).

Positions 9, 57, 85, 91, 102, and 112 each coordinate ATP. Catalysis depends on H115, which acts as the Pros-phosphohistidine intermediate.

It belongs to the NDK family. In terms of assembly, homotetramer. It depends on Mg(2+) as a cofactor.

The protein resides in the cytoplasm. It carries out the reaction a 2'-deoxyribonucleoside 5'-diphosphate + ATP = a 2'-deoxyribonucleoside 5'-triphosphate + ADP. The catalysed reaction is a ribonucleoside 5'-diphosphate + ATP = a ribonucleoside 5'-triphosphate + ADP. Its function is as follows. Major role in the synthesis of nucleoside triphosphates other than ATP. The ATP gamma phosphate is transferred to the NDP beta phosphate via a ping-pong mechanism, using a phosphorylated active-site intermediate. This Fervidobacterium nodosum (strain ATCC 35602 / DSM 5306 / Rt17-B1) protein is Nucleoside diphosphate kinase.